A 247-amino-acid polypeptide reads, in one-letter code: tRNA uridine(34) hydroxylase (247 aa).

The Rhodanese domain occupies 124-218; it reads TKQNVILIDT…YLEDTHNKNN (95 aa). The active-site Cysteine persulfide intermediate is Cys178.

The protein belongs to the TrhO family.

It catalyses the reaction uridine(34) in tRNA + AH2 + O2 = 5-hydroxyuridine(34) in tRNA + A + H2O. Catalyzes oxygen-dependent 5-hydroxyuridine (ho5U) modification at position 34 in tRNAs. This chain is tRNA uridine(34) hydroxylase, found in Rickettsia prowazekii (strain Madrid E).